Here is a 55-residue protein sequence, read N- to C-terminus: PI-stichotoxin-She2a (55 aa).

Positions 3 to 53 constitute a BPTI/Kunitz inhibitor domain; it reads CSEPKKVGRCKGYFPRFYFDSETGKCTPFIYGGCGGNGNNFETLHQCRAIC. Disulfide bonds link Cys-3-Cys-53, Cys-12-Cys-36, and Cys-28-Cys-49.

Its subcellular location is the secreted. It is found in the nematocyst. In terms of biological role, active against serine, cysteine, and aspartic proteases. Can bind vertebrate trypsin and chymotrypsin. This Stichodactyla helianthus (Sun anemone) protein is PI-stichotoxin-She2a.